The chain runs to 66 residues: Large ribosomal subunit protein bL35 (66 aa).

The protein belongs to the bacterial ribosomal protein bL35 family. Part of the 50S ribosomal subunit. Contacts proteins L15 and L33.

Its function is as follows. Binds the 23S rRNA. This Deinococcus radiodurans (strain ATCC 13939 / DSM 20539 / JCM 16871 / CCUG 27074 / LMG 4051 / NBRC 15346 / NCIMB 9279 / VKM B-1422 / R1) protein is Large ribosomal subunit protein bL35 (rpmI).